The primary structure comprises 299 residues: tRNA-cytidine(32) 2-sulfurtransferase (299 aa).

The PP-loop motif motif lies at 56-61 (SGGKDS). 3 residues coordinate [4Fe-4S] cluster: C131, C134, and C222.

The protein belongs to the TtcA family. In terms of assembly, homodimer. Mg(2+) is required as a cofactor. Requires [4Fe-4S] cluster as cofactor.

It localises to the cytoplasm. The enzyme catalyses cytidine(32) in tRNA + S-sulfanyl-L-cysteinyl-[cysteine desulfurase] + AH2 + ATP = 2-thiocytidine(32) in tRNA + L-cysteinyl-[cysteine desulfurase] + A + AMP + diphosphate + H(+). The protein operates within tRNA modification. Its function is as follows. Catalyzes the ATP-dependent 2-thiolation of cytidine in position 32 of tRNA, to form 2-thiocytidine (s(2)C32). The sulfur atoms are provided by the cysteine/cysteine desulfurase (IscS) system. This is tRNA-cytidine(32) 2-sulfurtransferase from Xylella fastidiosa (strain 9a5c).